A 149-amino-acid polypeptide reads, in one-letter code: 3-hydroxyacyl-[acyl-carrier-protein] dehydratase FabZ (149 aa).

His47 is a catalytic residue.

It belongs to the thioester dehydratase family. FabZ subfamily.

It is found in the cytoplasm. The enzyme catalyses a (3R)-hydroxyacyl-[ACP] = a (2E)-enoyl-[ACP] + H2O. Functionally, involved in unsaturated fatty acids biosynthesis. Catalyzes the dehydration of short chain beta-hydroxyacyl-ACPs and long chain saturated and unsaturated beta-hydroxyacyl-ACPs. The protein is 3-hydroxyacyl-[acyl-carrier-protein] dehydratase FabZ of Thioalkalivibrio sulfidiphilus (strain HL-EbGR7).